Here is an 87-residue protein sequence, read N- to C-terminus: UPF0473 protein Dred_0776 (87 aa).

This sequence belongs to the UPF0473 family.

The chain is UPF0473 protein Dred_0776 from Desulforamulus reducens (strain ATCC BAA-1160 / DSM 100696 / MI-1) (Desulfotomaculum reducens).